We begin with the raw amino-acid sequence, 113 residues long: Large ribosomal subunit protein bL19 (113 aa).

The protein belongs to the bacterial ribosomal protein bL19 family.

Functionally, this protein is located at the 30S-50S ribosomal subunit interface and may play a role in the structure and function of the aminoacyl-tRNA binding site. The chain is Large ribosomal subunit protein bL19 from Mycolicibacterium smegmatis (strain ATCC 700084 / mc(2)155) (Mycobacterium smegmatis).